Consider the following 78-residue polypeptide: Large ribosomal subunit protein bL28 (78 aa).

A disordered region spans residues 1 to 21 (MSRVCQVTGKKPMVGNNRSHA).

The protein belongs to the bacterial ribosomal protein bL28 family.

The sequence is that of Large ribosomal subunit protein bL28 from Shewanella piezotolerans (strain WP3 / JCM 13877).